Consider the following 222-residue polypeptide: MELTLHEARVIGCLLEKEVTTPEQYPLSLNALTLACNQKTSREPVLELTEAQVQDALDSLNKKRLISEQSGFGSRVVKYKHRFCNTEFSELQLSTAAVAIVCLLLLRGPQTPGELRTRSNRLHDFKDVLEVEACIKQLMERDKPVLTQLPREPGKRECRYTELFSQGSEQVSATSLSADSPSADSNSLNAQDRQQLEARVTQLEGQVAELKDKLESLIASLS.

Residues 169–193 are compositionally biased toward polar residues; sequence EQVSATSLSADSPSADSNSLNAQDR. Residues 169–195 form a disordered region; that stretch reads EQVSATSLSADSPSADSNSLNAQDRQQ.

It belongs to the UPF0502 family.

The sequence is that of UPF0502 protein SO_1867 from Shewanella oneidensis (strain ATCC 700550 / JCM 31522 / CIP 106686 / LMG 19005 / NCIMB 14063 / MR-1).